The sequence spans 248 residues: Large ribosomal subunit protein uL4 (248 aa).

The segment at 44 to 109 (QDTGTDEYAG…LDINTKERKL (66 aa)) is disordered. A compositionally biased stretch (basic and acidic residues) spans 92–109 (PKAEKDRGLDINTKERKL).

This sequence belongs to the universal ribosomal protein uL4 family. Part of the 50S ribosomal subunit.

Functionally, one of the primary rRNA binding proteins, this protein initially binds near the 5'-end of the 23S rRNA. It is important during the early stages of 50S assembly. It makes multiple contacts with different domains of the 23S rRNA in the assembled 50S subunit and ribosome. Its function is as follows. Forms part of the polypeptide exit tunnel. This chain is Large ribosomal subunit protein uL4, found in Natronomonas pharaonis (strain ATCC 35678 / DSM 2160 / CIP 103997 / JCM 8858 / NBRC 14720 / NCIMB 2260 / Gabara) (Halobacterium pharaonis).